The following is a 486-amino-acid chain: Aspartyl/glutamyl-tRNA(Asn/Gln) amidotransferase subunit B (486 aa).

The protein belongs to the GatB/GatE family. GatB subfamily. In terms of assembly, heterotrimer of A, B and C subunits.

The enzyme catalyses L-glutamyl-tRNA(Gln) + L-glutamine + ATP + H2O = L-glutaminyl-tRNA(Gln) + L-glutamate + ADP + phosphate + H(+). It catalyses the reaction L-aspartyl-tRNA(Asn) + L-glutamine + ATP + H2O = L-asparaginyl-tRNA(Asn) + L-glutamate + ADP + phosphate + 2 H(+). Functionally, allows the formation of correctly charged Asn-tRNA(Asn) or Gln-tRNA(Gln) through the transamidation of misacylated Asp-tRNA(Asn) or Glu-tRNA(Gln) in organisms which lack either or both of asparaginyl-tRNA or glutaminyl-tRNA synthetases. The reaction takes place in the presence of glutamine and ATP through an activated phospho-Asp-tRNA(Asn) or phospho-Glu-tRNA(Gln). The sequence is that of Aspartyl/glutamyl-tRNA(Asn/Gln) amidotransferase subunit B from Leptospira interrogans serogroup Icterohaemorrhagiae serovar Lai (strain 56601).